The chain runs to 439 residues: Histidine--tRNA ligase (439 aa).

This sequence belongs to the class-II aminoacyl-tRNA synthetase family. Homodimer.

Its subcellular location is the cytoplasm. It catalyses the reaction tRNA(His) + L-histidine + ATP = L-histidyl-tRNA(His) + AMP + diphosphate + H(+). The sequence is that of Histidine--tRNA ligase (hisS) from Leptospira interrogans serogroup Icterohaemorrhagiae serovar Lai (strain 56601).